Consider the following 417-residue polypeptide: Transmembrane protease serine 11G (417 aa).

Residues 1-21 (MYQPGILVRRKRVWKPWTVAL) lie on the Cytoplasmic side of the membrane. The helical; Signal-anchor for type II membrane protein transmembrane segment at 22-42 (ITVALLLALAVLIGLLVYFLV) threads the bilayer. Over 43 to 417 (YDEKTHYYQA…RDWIKSKTSI (375 aa)) the chain is Extracellular. An SEA domain is found at 46 to 165 (KTHYYQASFW…PYLREMNAAQ (120 aa)). Asn60 is a glycosylation site (N-linked (GlcNAc...) asparagine). Residues 186-416 (IADGKPADKA…YRDWIKSKTS (231 aa)) form the Peptidase S1 domain. The cysteines at positions 211 and 227 are disulfide-linked. Residues His226 and Asp271 each act as charge relay system in the active site. Disulfide bonds link Cys336/Cys352 and Cys363/Cys392. Ser367 functions as the Charge relay system in the catalytic mechanism.

This sequence belongs to the peptidase S1 family.

It localises to the membrane. This Mus musculus (Mouse) protein is Transmembrane protease serine 11G (Tmprss11g).